The following is a 370-amino-acid chain: 3-isopropylmalate dehydrogenase 2 (370 aa).

77-90 (GPKWDAVPYEVRPE) is an NAD(+) binding site. 4 residues coordinate substrate: Arg97, Arg107, Arg135, and Asp226. Residues Asp226, Asp250, and Asp254 each contribute to the Mg(2+) site. 290-302 (GSAPDIAGKGLAN) is a binding site for NAD(+).

The protein belongs to the isocitrate and isopropylmalate dehydrogenases family. LeuB type 1 subfamily. In terms of assembly, homodimer. Mg(2+) serves as cofactor. The cofactor is Mn(2+).

It is found in the cytoplasm. The enzyme catalyses (2R,3S)-3-isopropylmalate + NAD(+) = 4-methyl-2-oxopentanoate + CO2 + NADH. It participates in amino-acid biosynthesis; L-leucine biosynthesis; L-leucine from 3-methyl-2-oxobutanoate: step 3/4. Functionally, catalyzes the oxidation of 3-carboxy-2-hydroxy-4-methylpentanoate (3-isopropylmalate) to 3-carboxy-4-methyl-2-oxopentanoate. The product decarboxylates to 4-methyl-2 oxopentanoate. This chain is 3-isopropylmalate dehydrogenase 2, found in Bradyrhizobium diazoefficiens (strain JCM 10833 / BCRC 13528 / IAM 13628 / NBRC 14792 / USDA 110).